The primary structure comprises 465 residues: Protein DML1 (465 aa).

It belongs to the misato family.

It is found in the mitochondrion. Functionally, involved in the partitioning of the mitochondrial organelle and mitochondrial DNA (mtDNA) inheritance. The sequence is that of Protein DML1 (DML1) from Eremothecium gossypii (strain ATCC 10895 / CBS 109.51 / FGSC 9923 / NRRL Y-1056) (Yeast).